A 259-amino-acid chain; its full sequence is Ribonuclease PH (259 aa).

Phosphate contacts are provided by residues Arg88 and 126 to 128; that span reads GTR.

The protein belongs to the RNase PH family. In terms of assembly, homohexameric ring arranged as a trimer of dimers.

The enzyme catalyses tRNA(n+1) + phosphate = tRNA(n) + a ribonucleoside 5'-diphosphate. Its function is as follows. Phosphorolytic 3'-5' exoribonuclease that plays an important role in tRNA 3'-end maturation. Removes nucleotide residues following the 3'-CCA terminus of tRNAs; can also add nucleotides to the ends of RNA molecules by using nucleoside diphosphates as substrates, but this may not be physiologically important. Probably plays a role in initiation of 16S rRNA degradation (leading to ribosome degradation) during starvation. The protein is Ribonuclease PH of Mycolicibacterium smegmatis (strain ATCC 700084 / mc(2)155) (Mycobacterium smegmatis).